Reading from the N-terminus, the 347-residue chain is Melatonin receptor type 1B-B (347 aa).

The Extracellular segment spans residues Met1–Ser36. An N-linked (GlcNAc...) asparagine glycan is attached at Asn10. The helical transmembrane segment at Val37–Phe57 threads the bilayer. Residues Arg58 to Ser72 lie on the Cytoplasmic side of the membrane. Residues Leu73–Phe93 form a helical membrane-spanning segment. Topologically, residues His94 to Lys105 are extracellular. Cys104 and Cys181 are oxidised to a cystine. A helical transmembrane segment spans residues Ile106–Ala126. Residues Ile127–Thr148 are Cytoplasmic-facing. A helical membrane pass occupies residues Leu149–Val169. At Gly170–Tyr191 the chain is on the extracellular side. The helical transmembrane segment at Thr192–Leu212 threads the bilayer. Residues Arg213–Met244 lie on the Cytoplasmic side of the membrane. A helical membrane pass occupies residues Phe245–Val265. Residues Ala266–Glu278 lie on the Extracellular side of the membrane. The chain crosses the membrane as a helical span at residues Trp279–Tyr299. Topologically, residues Gly300–Glu347 are cytoplasmic.

This sequence belongs to the G-protein coupled receptor 1 family.

The protein localises to the cell membrane. Functionally, high affinity receptor for melatonin. The activity of this receptor is mediated by pertussis toxin sensitive G proteins that inhibits adenylate cyclase activity. The chain is Melatonin receptor type 1B-B (mtnr1bb) from Danio rerio (Zebrafish).